A 302-amino-acid chain; its full sequence is F-box protein At1g20360 (302 aa).

The 48-residue stretch at 1–48 (MNSLPLHLLDQILFRLEPKSLAMMKSTNRTINSHISDPLFESEYFSRL) folds into the F-box domain.

The sequence is that of F-box protein At1g20360 from Arabidopsis thaliana (Mouse-ear cress).